A 246-amino-acid chain; its full sequence is Proteasome subunit alpha (246 aa).

This sequence belongs to the peptidase T1A family. As to quaternary structure, the 20S proteasome core is composed of 14 alpha and 14 beta subunits that assemble into four stacked heptameric rings, resulting in a barrel-shaped structure. The two inner rings, each composed of seven catalytic beta subunits, are sandwiched by two outer rings, each composed of seven alpha subunits. The catalytic chamber with the active sites is on the inside of the barrel. Has a gated structure, the ends of the cylinder being occluded by the N-termini of the alpha-subunits. Is capped at one or both ends by the proteasome regulatory ATPase, PAN.

It is found in the cytoplasm. With respect to regulation, the formation of the proteasomal ATPase PAN-20S proteasome complex, via the docking of the C-termini of PAN into the intersubunit pockets in the alpha-rings, triggers opening of the gate for substrate entry. Interconversion between the open-gate and close-gate conformations leads to a dynamic regulation of the 20S proteasome proteolysis activity. Functionally, component of the proteasome core, a large protease complex with broad specificity involved in protein degradation. This Methanopyrus kandleri (strain AV19 / DSM 6324 / JCM 9639 / NBRC 100938) protein is Proteasome subunit alpha.